Reading from the N-terminus, the 169-residue chain is Ribosomal RNA large subunit methyltransferase H (169 aa).

Residues L85, G117, and L136–W141 each bind S-adenosyl-L-methionine.

It belongs to the RNA methyltransferase RlmH family. Homodimer.

It is found in the cytoplasm. The catalysed reaction is pseudouridine(1915) in 23S rRNA + S-adenosyl-L-methionine = N(3)-methylpseudouridine(1915) in 23S rRNA + S-adenosyl-L-homocysteine + H(+). In terms of biological role, specifically methylates the pseudouridine at position 1915 (m3Psi1915) in 23S rRNA. This Brucella abortus biovar 1 (strain 9-941) protein is Ribosomal RNA large subunit methyltransferase H.